Reading from the N-terminus, the 271-residue chain is Tryptophan synthase alpha chain (271 aa).

Catalysis depends on proton acceptor residues Glu49 and Asp60.

The protein belongs to the TrpA family. In terms of assembly, tetramer of two alpha and two beta chains.

It carries out the reaction (1S,2R)-1-C-(indol-3-yl)glycerol 3-phosphate + L-serine = D-glyceraldehyde 3-phosphate + L-tryptophan + H2O. It functions in the pathway amino-acid biosynthesis; L-tryptophan biosynthesis; L-tryptophan from chorismate: step 5/5. Its function is as follows. The alpha subunit is responsible for the aldol cleavage of indoleglycerol phosphate to indole and glyceraldehyde 3-phosphate. The protein is Tryptophan synthase alpha chain of Burkholderia multivorans (strain ATCC 17616 / 249).